The primary structure comprises 690 residues: Protein arginine N-methyltransferase 7 (690 aa).

SAM-dependent MTase PRMT-type domains follow at residues 14 to 357 (QNSW…YSLW) and 366 to 690 (TKSV…QKKL).

Belongs to the class I-like SAM-binding methyltransferase superfamily. Protein arginine N-methyltransferase family. PRMT7 subfamily.

Essential arginine methyltransferase that can both catalyze the formation of omega-N monomethylarginine (MMA) and symmetrical dimethylarginine (sDMA). Specifically mediates the symmetrical dimethylation of arginine residues in the small nuclear ribonucleoproteins SmD1 and SmD3. The sequence is that of Protein arginine N-methyltransferase 7 (Art7) from Drosophila yakuba (Fruit fly).